Here is a 329-residue protein sequence, read N- to C-terminus: Quinone-oxidoreductase QR1, chloroplastic (329 aa).

The protein belongs to the zinc-containing alcohol dehydrogenase family. Quinone oxidoreductase subfamily.

The protein localises to the plastid. It localises to the chloroplast outer membrane. The catalysed reaction is 2 a quinone + NADPH + H(+) = 2 a 1,4-benzosemiquinone + NADP(+). Its activity is regulated as follows. Inhibited by dicumarol. In terms of biological role, NADPH-dependent single-electron reducing quinone reductase. Involved in haustorium initiation in parasitic plants through redox cycling of exogenous haustorium-inducing factors. Can use 9,10-phenanthrenequinone (PAQ), 1,2-naphthoquinone, 5-hydroxy-1,4-naphthoquinone (juglone) and 2,6-dimethoxy-p-benzoquinone (DMBQ) as substrates, but has no activity with menadione, diamide, 2,3-dimethoxy-5-methyl-1,4-benzoquinone or 1,4-naphthoquinone. The protein is Quinone-oxidoreductase QR1, chloroplastic of Triphysaria versicolor (Yellow owl's clover).